The primary structure comprises 215 residues: UPF0502 protein YceH (215 aa).

Position 80 is an N6-acetyllysine (Lys-80).

The protein belongs to the UPF0502 family.

This chain is UPF0502 protein YceH, found in Shigella boydii serotype 18 (strain CDC 3083-94 / BS512).